The following is a 292-amino-acid chain: Elongation factor Ts (292 aa).

The tract at residues 81–84 (TDFV) is involved in Mg(2+) ion dislocation from EF-Tu.

The protein belongs to the EF-Ts family.

The protein localises to the cytoplasm. Functionally, associates with the EF-Tu.GDP complex and induces the exchange of GDP to GTP. It remains bound to the aminoacyl-tRNA.EF-Tu.GTP complex up to the GTP hydrolysis stage on the ribosome. The polypeptide is Elongation factor Ts (Alkalilimnicola ehrlichii (strain ATCC BAA-1101 / DSM 17681 / MLHE-1)).